We begin with the raw amino-acid sequence, 904 residues long: Translation initiation factor IF-2 (904 aa).

Disordered regions lie at residues 134–248 (RQRN…GSHV) and 267–315 (HLSA…FERP). The segment covering 136–177 (RNLDEQQRLAESDRVRDEEIQRKRDEEQAAKDRAEAERKAAE) has biased composition (basic and acidic residues). 2 stretches are compositionally biased toward low complexity: residues 178 to 230 (EAAA…STPA) and 285 to 303 (GRPG…RGSN). The tr-type G domain maps to 403-572 (TRPPVVTIMG…SLQAEVLELK (170 aa)). The G1 stretch occupies residues 412–419 (GHVDHGKT). GTP is bound at residue 412-419 (GHVDHGKT). The interval 437–441 (GITQH) is G2. The G3 stretch occupies residues 458 to 461 (DTPG). Residues 458 to 462 (DTPGH) and 512 to 515 (NKID) each bind GTP. A G4 region spans residues 512 to 515 (NKID). Positions 548–550 (SAK) are G5.

Belongs to the TRAFAC class translation factor GTPase superfamily. Classic translation factor GTPase family. IF-2 subfamily.

Its subcellular location is the cytoplasm. One of the essential components for the initiation of protein synthesis. Protects formylmethionyl-tRNA from spontaneous hydrolysis and promotes its binding to the 30S ribosomal subunits. Also involved in the hydrolysis of GTP during the formation of the 70S ribosomal complex. This chain is Translation initiation factor IF-2, found in Xanthomonas oryzae pv. oryzae (strain PXO99A).